Here is a 535-residue protein sequence, read N- to C-terminus: Peptide chain release factor 3 (535 aa).

Residues 8–277 (KRRRTFAIIS…TLVELAPPPG (270 aa)) form the tr-type G domain. GTP-binding positions include 17 to 24 (SHPDAGKT), 85 to 89 (DTPGH), and 139 to 142 (NKLD).

The protein belongs to the TRAFAC class translation factor GTPase superfamily. Classic translation factor GTPase family. PrfC subfamily.

It is found in the cytoplasm. In terms of biological role, increases the formation of ribosomal termination complexes and stimulates activities of RF-1 and RF-2. It binds guanine nucleotides and has strong preference for UGA stop codons. It may interact directly with the ribosome. The stimulation of RF-1 and RF-2 is significantly reduced by GTP and GDP, but not by GMP. The sequence is that of Peptide chain release factor 3 from Nitrosomonas europaea (strain ATCC 19718 / CIP 103999 / KCTC 2705 / NBRC 14298).